The primary structure comprises 475 residues: Sulfate adenylyltransferase subunit 1 (475 aa).

Residues 25–239 (KSLLRFLTCG…EVLETVEIQR (215 aa)) form the tr-type G domain. Residues 34–41 (GSVDDGKS) are G1. 34-41 (GSVDDGKS) is a GTP binding site. The segment at 92 to 96 (GITID) is G2. A G3 region spans residues 113–116 (DTPG). GTP-binding positions include 113-117 (DTPGH) and 168-171 (NKMD). Positions 168 to 171 (NKMD) are G4. The segment at 206-208 (SAL) is G5.

This sequence belongs to the TRAFAC class translation factor GTPase superfamily. Classic translation factor GTPase family. CysN/NodQ subfamily. Heterodimer composed of CysD, the smaller subunit, and CysN.

The enzyme catalyses sulfate + ATP + H(+) = adenosine 5'-phosphosulfate + diphosphate. It participates in sulfur metabolism; hydrogen sulfide biosynthesis; sulfite from sulfate: step 1/3. Its function is as follows. With CysD forms the ATP sulfurylase (ATPS) that catalyzes the adenylation of sulfate producing adenosine 5'-phosphosulfate (APS) and diphosphate, the first enzymatic step in sulfur assimilation pathway. APS synthesis involves the formation of a high-energy phosphoric-sulfuric acid anhydride bond driven by GTP hydrolysis by CysN coupled to ATP hydrolysis by CysD. The protein is Sulfate adenylyltransferase subunit 1 of Escherichia coli O9:H4 (strain HS).